Consider the following 494-residue polypeptide: Transcriptional regulator of yeast form adherence 3 (494 aa).

An SPX domain is found at 1-360 (MKFAKTLERT…SLGIQKTFPK (360 aa)). An RING-type zinc finger spans residues 398–437 (CPICMNIAYKPIRLSCGHLFCVRCLVKMKQDDKTSCPLCR).

The protein resides in the nucleus. Transcription factor required for yeast cell adherence to silicone substrate. The protein is Transcriptional regulator of yeast form adherence 3 (TRY3) of Candida albicans (strain SC5314 / ATCC MYA-2876) (Yeast).